Here is a 224-residue protein sequence, read N- to C-terminus: Peroxiredoxin-6 (224 aa).

The Thioredoxin domain occupies 5–169 (LLLGDVAPNF…ILRVVISLQL (165 aa)). Residues 31-40 (DSWGILFSHP) form a required and sufficient for targeting to lysosomes and lamellar bodies region. Residue Thr-44 is modified to Phosphothreonine. The Cysteine sulfenic acid (-SOH) intermediate; for peroxidase activity role is filled by Cys-47. Lys-63 is subject to N6-acetyllysine. Phosphotyrosine is present on Tyr-89. The active-site For phospholipase activity is the Asp-140. Residue Thr-177 is modified to Phosphothreonine; by MAPK. Lys-209 is modified (N6-acetyllysine; alternate). Position 209 is an N6-succinyllysine; alternate (Lys-209).

The protein belongs to the peroxiredoxin family. Prx6 subfamily. As to quaternary structure, homodimer. Interacts with GSTP1; mediates PRDX6 glutathionylation and regeneration. Interacts with APEX1. Interacts with STH. May interact with FAM168B. May interact with HTR2A. In terms of processing, irreversibly inactivated by overoxidation of Cys-47 to sulfinic acid (Cys-SO(2)H) and sulfonic acid (Cys-SO(3)H) forms upon oxidative stress. Phosphorylation at Thr-177 by MAP kinases increases the phospholipase activity of the enzyme. The phosphorylated form exhibits a greater lysophosphatidylcholine acyltransferase activity compared to the non-phosphorylated form.

The protein resides in the cytoplasm. It localises to the lysosome. The enzyme catalyses a hydroperoxide + 2 glutathione = an alcohol + glutathione disulfide + H2O. The catalysed reaction is a 1,2-diacyl-sn-glycero-3-phosphocholine + H2O = a 1-acyl-sn-glycero-3-phosphocholine + a fatty acid + H(+). It catalyses the reaction a 1-acyl-sn-glycero-3-phosphocholine + an acyl-CoA = a 1,2-diacyl-sn-glycero-3-phosphocholine + CoA. It carries out the reaction 1-hexadecanoyl-sn-glycero-3-phosphocholine + hexadecanoyl-CoA = 1,2-dihexadecanoyl-sn-glycero-3-phosphocholine + CoA. The enzyme catalyses 1,2-dihexadecanoyl-sn-glycero-3-phosphocholine + H2O = 1-hexadecanoyl-sn-glycero-3-phosphocholine + hexadecanoate + H(+). MJ33 or lithium;[(2R)-1-hexadecoxy-3-(2,2,2-trifluoroethoxy)propan-2-yl] methyl phosphate inhibits its phospholipase A2 activity. CI-976 or 2,2-Dimethyl-N-(2,4,6-trimethoxyphenyl)dodecanamide inhibits its lysophosphatidylcholine acyltransferase activity. Thiol-specific peroxidase that catalyzes the reduction of hydrogen peroxide and organic hydroperoxides to water and alcohols, respectively. Can reduce H(2)O(2) and short chain organic, fatty acid, and phospholipid hydroperoxides. Also has phospholipase activity, can therefore either reduce the oxidized sn-2 fatty acyl group of phospholipids (peroxidase activity) or hydrolyze the sn-2 ester bond of phospholipids (phospholipase activity). These activities are dependent on binding to phospholipids at acidic pH and to oxidized phospholipds at cytosolic pH. Plays a role in cell protection against oxidative stress by detoxifying peroxides and in phospholipid homeostasis. Exhibits acyl-CoA-dependent lysophospholipid acyltransferase which mediates the conversion of lysophosphatidylcholine (1-acyl-sn-glycero-3-phosphocholine or LPC) into phosphatidylcholine (1,2-diacyl-sn-glycero-3-phosphocholine or PC). Shows a clear preference for LPC as the lysophospholipid and for palmitoyl CoA as the fatty acyl substrate. This chain is Peroxiredoxin-6 (PRDX6), found in Homo sapiens (Human).